The primary structure comprises 296 residues: Probable 6-phosphogluconolactonase 1 (296 aa).

This sequence belongs to the glucosamine/galactosamine-6-phosphate isomerase family. 6-phosphogluconolactonase subfamily.

It catalyses the reaction 6-phospho-D-glucono-1,5-lactone + H2O = 6-phospho-D-gluconate + H(+). Its pathway is carbohydrate degradation; pentose phosphate pathway; D-ribulose 5-phosphate from D-glucose 6-phosphate (oxidative stage): step 2/3. In terms of biological role, hydrolysis of 6-phosphogluconolactone to 6-phosphogluconate. This chain is Probable 6-phosphogluconolactonase 1, found in Oryza sativa subsp. japonica (Rice).